Here is a 234-residue protein sequence, read N- to C-terminus: Leucyl/phenylalanyl-tRNA--protein transferase (234 aa).

This sequence belongs to the L/F-transferase family.

It is found in the cytoplasm. It carries out the reaction N-terminal L-lysyl-[protein] + L-leucyl-tRNA(Leu) = N-terminal L-leucyl-L-lysyl-[protein] + tRNA(Leu) + H(+). It catalyses the reaction N-terminal L-arginyl-[protein] + L-leucyl-tRNA(Leu) = N-terminal L-leucyl-L-arginyl-[protein] + tRNA(Leu) + H(+). The catalysed reaction is L-phenylalanyl-tRNA(Phe) + an N-terminal L-alpha-aminoacyl-[protein] = an N-terminal L-phenylalanyl-L-alpha-aminoacyl-[protein] + tRNA(Phe). Its function is as follows. Functions in the N-end rule pathway of protein degradation where it conjugates Leu, Phe and, less efficiently, Met from aminoacyl-tRNAs to the N-termini of proteins containing an N-terminal arginine or lysine. This Syntrophobacter fumaroxidans (strain DSM 10017 / MPOB) protein is Leucyl/phenylalanyl-tRNA--protein transferase.